Reading from the N-terminus, the 272-residue chain is MKITRSRCLILSFVLVCGLVPEVTADVEEATDGLSTTQEPIWLTDVPATVELIAAAEVAVIGFFQDLEIPIVSVFRSMARQFQDVSFGISNHSEVLTHYNVTSNSICLFRLVDDQQLHLNAEDIENLDAAKLSRFIHVNNLHWVTEYSPMIAAGLFNTMVQTHLLLMMKKTSPEYEESMRRYREAAKLFQGQILFVLVDSGKRENGKVMSYFKLKESQLPALAIYESVDDKWDTLPIAEVTVEKVRGFCEGFLKGLLQRDHEAEGDSGKEEL.

A signal peptide spans 1–25; the sequence is MKITRSRCLILSFVLVCGLVPEVTA. The 114-residue stretch at 39 to 152 folds into the Thioredoxin domain; sequence EPIWLTDVPA…WVTEYSPMIA (114 aa). 2 N-linked (GlcNAc...) asparagine glycosylation sites follow: Asn91 and Asn100. The interval 230–233 is PDIA3-binding site; the sequence is DKWD. Residues 269-272 carry the Prevents secretion from ER motif; sequence KEEL.

It belongs to the protein disulfide isomerase family. As to quaternary structure, interacts with PDIA3.

Its subcellular location is the endoplasmic reticulum lumen. Its function is as follows. Specifically binds unfolded proteins and may recruit protein disulfide isomerase PDIA3 to unfolded substrates. Binds protein substrates via a hydrophobic pocket in the C-terminal domain. May play a role in the unfolded stress response. The sequence is that of Endoplasmic reticulum resident protein 27 (Erp27) from Mus musculus (Mouse).